A 548-amino-acid chain; its full sequence is Sesquiterpene synthase 12 (548 aa).

Residues D299, D303, D444, and E452 each contribute to the Mg(2+) site. The short motif at 299 to 303 (DDTFD) is the DDXXD motif element.

This sequence belongs to the terpene synthase family. Tpsa subfamily. It depends on Mg(2+) as a cofactor. The cofactor is Mn(2+). Mostly expressed in leaves, to a lower extent in stems, trichomes, flowers and roots and, at low levels, in fruits.

The catalysed reaction is (2E,6E)-farnesyl diphosphate = alpha-humulene + diphosphate. It carries out the reaction (2E,6E)-farnesyl diphosphate = (-)-(E)-beta-caryophyllene + diphosphate. The enzyme catalyses (2Z,6Z)-farnesyl diphosphate = beta-bisabolene + diphosphate. It catalyses the reaction (2E)-geranyl diphosphate = terpinolene + diphosphate. The catalysed reaction is (2E)-geranyl diphosphate = limonene + diphosphate. It carries out the reaction (2E)-geranyl diphosphate = beta-myrcene + diphosphate. The enzyme catalyses (2E)-geranyl diphosphate = (E)-beta-ocimene + diphosphate. It catalyses the reaction (2Z,6Z)-farnesyl diphosphate = gamma-curcumene + diphosphate. The catalysed reaction is (2Z,6Z)-farnesyl diphosphate = (Z)-gamma-bisabolene + diphosphate. It functions in the pathway secondary metabolite biosynthesis; terpenoid biosynthesis. Functionally, sesquiterpene synthase involved in the biosynthesis of volatile compounds. Mediates the conversion of (2E,6E)-farnesyl diphosphate (FPP) into (1E,4E,8E)-alpha-humulene and (-)-(E)-beta-caryophyllene, and of (2Z,6Z)-farnesyl diphosphate ((ZZ)-FPP) into beta-bisabolene, gamma-curcumene and (Z)-gamma-bisabolene. Can act with a low efficiency as a monoterpene synthase with geranyl diphosphate (GPP) as substrate, thus producing beta-myrcene, (E)-beta-ocimene, limonene and terpinolene. This is Sesquiterpene synthase 12 from Solanum lycopersicum (Tomato).